The primary structure comprises 568 residues: Glucose-6-phosphate isomerase, cytosolic 1 (568 aa).

E360 serves as the catalytic Proton donor. Catalysis depends on residues H391 and K516.

Belongs to the GPI family. Homodimer.

Its subcellular location is the cytoplasm. The enzyme catalyses alpha-D-glucose 6-phosphate = beta-D-fructose 6-phosphate. The protein operates within carbohydrate degradation; glycolysis; D-glyceraldehyde 3-phosphate and glycerone phosphate from D-glucose: step 2/4. This is Glucose-6-phosphate isomerase, cytosolic 1 (PGIC1) from Clarkia williamsonii.